Here is a 70-residue protein sequence, read N- to C-terminus: DNA-directed RNA polymerase subunit omega (70 aa).

It belongs to the RNA polymerase subunit omega family. In terms of assembly, the RNAP catalytic core consists of 2 alpha, 1 beta, 1 beta' and 1 omega subunit. When a sigma factor is associated with the core the holoenzyme is formed, which can initiate transcription.

It carries out the reaction RNA(n) + a ribonucleoside 5'-triphosphate = RNA(n+1) + diphosphate. In terms of biological role, promotes RNA polymerase assembly. Latches the N- and C-terminal regions of the beta' subunit thereby facilitating its interaction with the beta and alpha subunits. The polypeptide is DNA-directed RNA polymerase subunit omega (Bacillus cereus (strain G9842)).